We begin with the raw amino-acid sequence, 322 residues long: Putative DNA-directed RNA polymerase subunit alpha-like 2 (322 aa).

The alpha N-terminal domain (alpha-NTD) stretch occupies residues 1–232 (MSNPNNGAEW…GLLSLVFQAE (232 aa)). Positions 280 to 322 (EGPVTDEEGDSIDPTFTPVQKWDITMNSYQYSGETFQGLLSRF) are alpha C-terminal domain (alpha-CTD).

It belongs to the RNA polymerase alpha chain family. In terms of assembly, in plastids the minimal PEP RNA polymerase catalytic core is composed of four subunits: alpha, beta, beta', and beta''. When a (nuclear-encoded) sigma factor is associated with the core the holoenzyme is formed, which can initiate transcription.

The protein resides in the plastid. Its subcellular location is the chloroplast. It catalyses the reaction RNA(n) + a ribonucleoside 5'-triphosphate = RNA(n+1) + diphosphate. Its function is as follows. DNA-dependent RNA polymerase catalyzes the transcription of DNA into RNA using the four ribonucleoside triphosphates as substrates. The polypeptide is Putative DNA-directed RNA polymerase subunit alpha-like 2 (rpoAL2-A) (Pelargonium hortorum (Common geranium)).